Here is a 210-residue protein sequence, read N- to C-terminus: Na(+)-translocating NADH-quinone reductase subunit D (210 aa).

Transmembrane regions (helical) follow at residues 42 to 62, 72 to 92, 103 to 123, 131 to 151, and 178 to 198; these read FVMT…VSLI, IIVQ…VLKA, VFVG…AFAM, LIDG…VGFF, and NGLM…IWVI.

Belongs to the NqrDE/RnfAE family. In terms of assembly, composed of six subunits; NqrA, NqrB, NqrC, NqrD, NqrE and NqrF.

The protein localises to the cell inner membrane. It catalyses the reaction a ubiquinone + n Na(+)(in) + NADH + H(+) = a ubiquinol + n Na(+)(out) + NAD(+). Functionally, NQR complex catalyzes the reduction of ubiquinone-1 to ubiquinol by two successive reactions, coupled with the transport of Na(+) ions from the cytoplasm to the periplasm. NqrA to NqrE are probably involved in the second step, the conversion of ubisemiquinone to ubiquinol. The polypeptide is Na(+)-translocating NADH-quinone reductase subunit D (Vibrio parahaemolyticus serotype O3:K6 (strain RIMD 2210633)).